The sequence spans 193 residues: Cysteine and glycine-rich protein 1 (193 aa).

The 52-residue stretch at 10–61 (CGVCQKTVYFAEEVQCEGNSFHKSCFLCMVCKKNLDSTTVAVHGEEIYCKSC) folds into the LIM zinc-binding 1 domain. Positions 64–69 (KKYGPK) match the Nuclear localization signal motif. Residue Ser-81 is modified to Phosphoserine. At Lys-84 the chain carries N6-acetyllysine. Lys-91 participates in a covalent cross-link: Glycyl lysine isopeptide (Lys-Gly) (interchain with G-Cter in SUMO2). Residues Lys-112, Lys-131, Lys-137, and Lys-161 each carry the N6-acetyllysine modification. An LIM zinc-binding 2 domain is found at 119–170 (CPRCSQAVYAAEKVIGAGKSWHKSCFRCAKCGKGLESTTLADKDGEIYCKGC). A Phosphoserine modification is found at Ser-192.

In terms of assembly, interacts with ASCC1; ASCC2 and TRIP4.

The protein localises to the nucleus. Its function is as follows. Could play a role in neuronal development. This is Cysteine and glycine-rich protein 1 (Csrp1) from Mus musculus (Mouse).